The chain runs to 427 residues: 3-phosphoshikimate 1-carboxyvinyltransferase (427 aa).

3-phosphoshikimate-binding residues include lysine 22, serine 23, and arginine 27. Lysine 22 serves as a coordination point for phosphoenolpyruvate. The phosphoenolpyruvate site is built by glycine 96 and arginine 124. 3-phosphoshikimate contacts are provided by serine 170, serine 171, glutamine 172, serine 199, aspartate 313, asparagine 336, and lysine 340. Glutamine 172 serves as a coordination point for phosphoenolpyruvate. The Proton acceptor role is filled by aspartate 313. 3 residues coordinate phosphoenolpyruvate: arginine 344, arginine 386, and lysine 411.

Belongs to the EPSP synthase family. As to quaternary structure, monomer.

It is found in the cytoplasm. The catalysed reaction is 3-phosphoshikimate + phosphoenolpyruvate = 5-O-(1-carboxyvinyl)-3-phosphoshikimate + phosphate. Its pathway is metabolic intermediate biosynthesis; chorismate biosynthesis; chorismate from D-erythrose 4-phosphate and phosphoenolpyruvate: step 6/7. Functionally, catalyzes the transfer of the enolpyruvyl moiety of phosphoenolpyruvate (PEP) to the 5-hydroxyl of shikimate-3-phosphate (S3P) to produce enolpyruvyl shikimate-3-phosphate and inorganic phosphate. The sequence is that of 3-phosphoshikimate 1-carboxyvinyltransferase from Aeromonas salmonicida.